Here is a 192-residue protein sequence, read N- to C-terminus: Adenylate kinase (192 aa).

12–17 (GSGKTT) is a binding site for ATP. Residues 34–63 (STGDLLRAEVASGSELGKTIDSFISKGNLV) form an NMP region. AMP contacts are provided by residues threonine 35, arginine 40, 61-63 (NLV), 88-91 (GYPR), and glutamine 95. The LID stretch occupies residues 130-136 (GRNRGAD). Residue arginine 131 participates in ATP binding. AMP-binding residues include arginine 133 and arginine 145. Arginine 173 contributes to the ATP binding site.

The protein belongs to the adenylate kinase family. As to quaternary structure, monomer.

It is found in the cytoplasm. The enzyme catalyses AMP + ATP = 2 ADP. The protein operates within purine metabolism; AMP biosynthesis via salvage pathway; AMP from ADP: step 1/1. Functionally, catalyzes the reversible transfer of the terminal phosphate group between ATP and AMP. Plays an important role in cellular energy homeostasis and in adenine nucleotide metabolism. In Campylobacter jejuni subsp. jejuni serotype O:2 (strain ATCC 700819 / NCTC 11168), this protein is Adenylate kinase.